We begin with the raw amino-acid sequence, 265 residues long: Tryptophan synthase alpha chain (265 aa).

Active-site proton acceptor residues include Glu49 and Asp60.

Belongs to the TrpA family. In terms of assembly, tetramer of two alpha and two beta chains.

The enzyme catalyses (1S,2R)-1-C-(indol-3-yl)glycerol 3-phosphate + L-serine = D-glyceraldehyde 3-phosphate + L-tryptophan + H2O. Its pathway is amino-acid biosynthesis; L-tryptophan biosynthesis; L-tryptophan from chorismate: step 5/5. The alpha subunit is responsible for the aldol cleavage of indoleglycerol phosphate to indole and glyceraldehyde 3-phosphate. The sequence is that of Tryptophan synthase alpha chain from Paracoccus denitrificans (strain Pd 1222).